A 333-amino-acid polypeptide reads, in one-letter code: Taste receptor type 2 member 38 (333 aa).

Over 1–17 the chain is Extracellular; sequence MLTLTRICTVSYEVRST. The chain crosses the membrane as a helical span at residues 18-38; that stretch reads FLFISVLEFAVGFLTNAFIFL. Residues 39 to 55 lie on the Cytoplasmic side of the membrane; that stretch reads VNFWDVVKRQPLSNSDC. The chain crosses the membrane as a helical span at residues 56 to 76; it reads VLLCLSISRLFLHGLLFLSAI. At 77–94 the chain is on the extracellular side; sequence QLTHFQKLSEPLNHSYHA. The chain crosses the membrane as a helical span at residues 95–115; it reads IIMLWMIANQANLWLATCLSL. At 116–142 the chain is on the cytoplasmic side; sequence LYCSKLIRSSHTFLICLASWVSRKICQ. A helical transmembrane segment spans residues 143–163; the sequence is MLLGIILCSCICTVLCVWCYF. The Extracellular portion of the chain corresponds to 164 to 190; sequence SRPHFTVTTVLFTNNNTRLNWQIKDLN. Asn-178 is a glycosylation site (N-linked (GlcNAc...) asparagine). Residues 191 to 211 form a helical membrane-spanning segment; sequence LFYSFLFCYLWSVPPFLLFLV. Residues 212–251 are Cytoplasmic-facing; sequence SSGMLTVSLGRHMRTMKVYTRDFRDPSLEAHIKALKSLVS. A helical transmembrane segment spans residues 252–272; the sequence is FFCFFVISSCAAFISVPLLIL. The Extracellular portion of the chain corresponds to 273 to 276; that stretch reads WRDK. The chain crosses the membrane as a helical span at residues 277–297; sequence IGVMVCVGIMAACPSGHAAIL. The Cytoplasmic portion of the chain corresponds to 298–333; sequence ISGNAKLRRAVTTILLWAQSSLKVRADHKADSRTLC.

It belongs to the G-protein coupled receptor T2R family.

Its subcellular location is the membrane. Receptor that may play a role in the perception of bitterness and is gustducin-linked. May play a role in sensing the chemical composition of the gastrointestinal content. The activity of this receptor may stimulate alpha gustducin, mediate PLC-beta-2 activation and lead to the gating of TRPM5. The sequence is that of Taste receptor type 2 member 38 (TAS2R38) from Hylobates klossii (Kloss's gibbon).